Consider the following 213-residue polypeptide: uncharacterized protein (213 aa).

Residues 2–91 (SRHPEVKWAQ…AEAKWWKKLV (90 aa)) form the CS domain. The interval 168–213 (GMGGMGGMDEFEDESDDEEEVSKPQDAEKAAEAGKSQESDAKAETS) is disordered. Residues 176-187 (DEFEDESDDEEE) show a composition bias toward acidic residues. Positions 188 to 213 (VSKPQDAEKAAEAGKSQESDAKAETS) are enriched in basic and acidic residues.

It belongs to the p23/wos2 family.

This is an uncharacterized protein from Oryza sativa subsp. japonica (Rice).